A 488-amino-acid chain; its full sequence is 1-hydroxycarotenoid 3,4-desaturase (488 aa).

FAD-binding positions include glutamate 31, lysine 39, serine 55–leucine 56, valine 247, asparagine 275, leucine 431, glycine 461, and glycine 468–isoleucine 469.

Belongs to the carotenoid/retinoid oxidoreductase family. As to quaternary structure, monomer.

It carries out the reaction rhodopin + A = (3E)-3,4-didehydrorhodopin + AH2. The catalysed reaction is 1'-hydroxy-gamma-carotene + A = 1'-hydroxytorulene + AH2. It catalyses the reaction 1-hydroxy-all-trans-1,2-dihydro-neurosporene + A = demethylspheroidene + AH2. The enzyme catalyses 1,1'-dihydroxy-1,1',2,2'-tetrahydroneurosporene + A = 1'-hydroxy-demethylspheroidene + AH2. It carries out the reaction 1,1'-dihydroxy-1,1',2,2'-tetrahydrolycopene + A = 1,1'-dihydroxy-3,4-didehydro-1,2-dihydrolycopene + AH2. Its pathway is carotenoid biosynthesis. Its function is as follows. Catalyzes the introduction of a C-3,4 double bond into 1'-hydroxy-gamma-carotene and rhodopin (1-hydroxylycopene) to yield 1'-hydroxytorulene and (3E)-3,4-didehydrorhodopin, respectively. Can also 1-hydroxy-all-trans-1,2-dihydro-neurosporene, 1,1'-dihydroxy-1,1',2,2'-tetrahydroneurosporene and 1,1'-dihydroxy-1,1',2,2'-tetrahydrolycopene. Probably involved in the synthesis of myxol, a gamma-carotene derivative. May use FAD as a proton acceptor. In Flavobacterium sp. (strain P99-3), this protein is 1-hydroxycarotenoid 3,4-desaturase.